The chain runs to 950 residues: A disintegrin and metalloproteinase with thrombospondin motifs 15 (950 aa).

A signal peptide spans 1-17 (MLLLGILTLAFAGRTAG). The propeptide occupies 18-212 (GSEPEREVVV…SRRRSGRAKR (195 aa)). A glycan (N-linked (GlcNAc...) asparagine) is linked at N141. The disordered stretch occupies residues 151–172 (SQGAHLLQRRGVPGGPSGDPTS). A Cysteine switch motif is present at residues 172-179 (SRCGVASG). A Zn(2+)-binding site is contributed by C174. Positions 218–427 (RYVETLVVAD…GHGDCLLDQP (210 aa)) constitute a Peptidase M12B domain. 11 disulfides stabilise this stretch: C293/C345, C322/C327, C339/C422, C377/C406, C448/C470, C459/C480, C465/C499, C493/C504, C528/C565, C532/C570, and C543/C555. Residue H361 participates in Zn(2+) binding. E362 is a catalytic residue. The Zn(2+) site is built by H365 and H371. The Disintegrin domain maps to 428-515 (SKPISLPEDL…ERHNLNKHRV (88 aa)). Residues 516 to 571 (DGSWAKWDPYGPCSRTCGGGVQLARRQCTNPTPANGGKYCEGVRVKYRSCNLEPCP) enclose the TSP type-1 1 domain. Residues N591, N623, and N679 are each glycosylated (N-linked (GlcNAc...) asparagine). The tract at residues 701–838 (AIPAGASSID…SNQVEQPDDR (138 aa)) is spacer. Residues 798-822 (FYLPKEPREDKSSHPKDPRGPSVLH) form a disordered region. Residues 802 to 816 (KEPREDKSSHPKDPR) show a composition bias toward basic and acidic residues. TSP type-1 domains follow at residues 839 to 895 (PPAR…EPCP) and 896 to 949 (TWEL…VLRP).

The cofactor is Zn(2+). Post-translationally, the precursor is cleaved by a furin endopeptidase. Glycosylated. Can be O-fucosylated by POFUT2 on a serine or a threonine residue found within the consensus sequence C1-X(2)-(S/T)-C2-G of the TSP type-1 repeat domains where C1 and C2 are the first and second cysteine residue of the repeat, respectively. Fucosylated repeats can then be further glycosylated by the addition of a beta-1,3-glucose residue by the glucosyltransferase, B3GALTL. Fucosylation mediates the efficient secretion of ADAMTS family members. Can be C-glycosylated with one or two mannose molecules on tryptophan residues within the consensus sequence W-X-X-W of the TPRs. Also N-glycosylated. These other glycosylations can also facilitate secretion. Expressed in fetal liver and kidney, but not in any of the adult tissues examined.

The protein resides in the secreted. It is found in the extracellular space. The protein localises to the extracellular matrix. It localises to the cell surface. Its function is as follows. Metalloprotease which has proteolytic activity against the proteoglycan VCAN, cleaving it at the 'Glu-1428-|-1429-Ala' site. Cleaves VCAN in the pericellular matrix surrounding myoblasts, facilitating myoblast contact and fusion which is required for skeletal muscle development and regeneration. The sequence is that of A disintegrin and metalloproteinase with thrombospondin motifs 15 (ADAMTS15) from Homo sapiens (Human).